The following is a 526-amino-acid chain: Arginine/ornithine antiporter ArcD1 (526 aa).

The next 14 helical transmembrane spans lie at Gly-8–Phe-28, Gly-41–Leu-61, Phe-88–Leu-108, Leu-128–Met-148, Ile-160–Phe-180, Val-220–Met-240, Ile-255–Phe-275, Val-297–Trp-317, Leu-354–Ala-374, Phe-378–Phe-398, Thr-407–Ser-427, Gly-428–Leu-448, Phe-466–Leu-486, and Asn-495–Val-515.

Belongs to the amino acid-polyamine-organocation (APC) superfamily. Basic amino acid/polyamine antiporter (APA) (TC 2.A.3.2) family.

It localises to the cell membrane. It catalyses the reaction L-ornithine(in) + L-arginine(out) = L-ornithine(out) + L-arginine(in). Functionally, catalyzes electroneutral exchange between L-arginine and L-ornithine. Can also efficiently translocate L-histidine and L-lysine. ArcD1 is the main L-arginine/L-ornithine exchanger in the arginine deiminase (ADI) pathway. In Lactococcus lactis subsp. cremoris (strain MG1363), this protein is Arginine/ornithine antiporter ArcD1.